We begin with the raw amino-acid sequence, 1626 residues long: DNA topoisomerase 2-beta (1626 aa).

Alanine 2 bears the N-acetylalanine mark. At lysine 3 the chain carries N6-acetyllysine. Residues glutamine 28, asparagine 29, lysine 33, and lysine 34 each participate in a glycyl lysine isopeptide (Lys-Gly) (interchain with G-Cter in SUMO2) cross-link. Residues asparagine 112, asparagine 141, and 169-171 (SSN) contribute to the ATP site. Glycyl lysine isopeptide (Lys-Gly) (interchain with G-Cter in SUMO2) cross-links involve residues lysine 177 and lysine 178. Residue 182–189 (GRNGYGAK) participates in ATP binding. Residues lysine 228 and lysine 299 each participate in a glycyl lysine isopeptide (Lys-Gly) (interchain with G-Cter in SUMO2) cross-link. The segment at 363 to 365 (KKK) is interaction with DNA. Residues lysine 367 and lysine 373 each participate in a glycyl lysine isopeptide (Lys-Gly) (interchain with G-Cter in SUMO2) cross-link. 397–399 (QTK) lines the ATP pocket. Glycyl lysine isopeptide (Lys-Gly) (interchain with G-Cter in SUMO2) cross-links involve residues lysine 437, lysine 439, and lysine 446. Positions 476-593 (CTLILTEGDS…SLLKHGFLEE (118 aa)) constitute a Toprim domain. Residues glutamate 482, aspartate 562, and aspartate 564 each coordinate Mg(2+). Glycyl lysine isopeptide (Lys-Gly) (interchain with G-Cter in SUMO2) cross-links involve residues lysine 600, lysine 605, lysine 635, lysine 643, lysine 646, lysine 676, and lysine 712. The Topo IIA-type catalytic domain maps to 736–1189 (IPSLVDGFKP…SPSDLWKEDL (454 aa)). Catalysis depends on tyrosine 826, which acts as the O-(5'-phospho-DNA)-tyrosine intermediate. Positions 1011–1020 (KLQTTLTCNS) are interaction with DNA. A Nuclear export signal motif is present at residues 1034–1044 (ETVQDILKEFF). Lysine 1092 is covalently cross-linked (Glycyl lysine isopeptide (Lys-Gly) (interchain with G-Cter in SUMO2)). The tract at residues 1110–1140 (AWKEAQEKAAEEDETQNQHDDSSSDSGTPSG) is disordered. Glycyl lysine isopeptide (Lys-Gly) (interchain with G-Cter in SUMO2) cross-links involve residues lysine 1214, lysine 1217, lysine 1226, and lysine 1227. Serine 1236 is subject to Phosphoserine. Glycyl lysine isopeptide (Lys-Gly) (interchain with G-Cter in SUMO2) cross-links involve residues lysine 1250, lysine 1262, and lysine 1271. A disordered region spans residues 1274–1604 (FDEEFSGAPV…PSLPRTGRAR (331 aa)). Threonine 1292 carries the post-translational modification Phosphothreonine. Glycyl lysine isopeptide (Lys-Gly) (interchain with G-Cter in SUMO2) cross-links involve residues lysine 1323 and lysine 1327. 2 stretches are compositionally biased toward basic and acidic residues: residues 1334–1344 (PWSDDESKSES) and 1358–1370 (SLLRRAAAERPKY). Residues serine 1336, serine 1340, serine 1342, serine 1344, and serine 1358 each carry the phosphoserine modification. Tyrosine 1370 is subject to Phosphotyrosine. Over residues 1374–1392 (FSEEEDDDADDDDDDNNDL) the composition is skewed to acidic residues. At serine 1375 the chain carries Phosphoserine. Lysine 1398 participates in a covalent cross-link: Glycyl lysine isopeptide (Lys-Gly) (interchain with G-Cter in SUMO2). Residue serine 1400 is modified to Phosphoserine. Threonine 1403 is subject to Phosphothreonine. A Phosphoserine modification is found at serine 1413. The residue at position 1421 (tyrosine 1421) is a Phosphotyrosine. Phosphoserine is present on serine 1424. The span at 1430-1442 (ATPEKSLHDKKSQ) shows a compositional bias: basic and acidic residues. A Glycyl lysine isopeptide (Lys-Gly) (interchain with G-Cter in SUMO2) cross-link involves residue lysine 1440. 3 positions are modified to phosphoserine: serine 1441, serine 1452, and serine 1454. Residue lysine 1456 forms a Glycyl lysine isopeptide (Lys-Gly) (interchain with G-Cter in SUMO2) linkage. Residues 1456–1466 (KSEDDSAKFDS) show a composition bias toward basic and acidic residues. Phosphoserine occurs at positions 1461, 1466, 1473, and 1476. Lysine 1490 participates in a covalent cross-link: Glycyl lysine isopeptide (Lys-Gly) (interchain with G-Cter in SUMO2). The tract at residues 1506–1512 (KPKRAPK) is interaction with PLSCR1. A phosphoserine mark is found at serine 1522, serine 1524, and serine 1526. Basic residues predominate over residues 1539-1549 (GKGRGAKKRKA). Phosphoserine is present on residues serine 1550 and serine 1552. A compositionally biased stretch (basic residues) spans 1563–1574 (KTSKTTSKKPKK). A Phosphothreonine modification is found at threonine 1575. Phosphoserine is present on residues serine 1576 and serine 1581. Threonine 1592 carries the post-translational modification Phosphothreonine. At serine 1596 the chain carries Phosphoserine. Tyrosine 1609 bears the Phosphotyrosine mark. At serine 1613 the chain carries Phosphoserine.

It belongs to the type II topoisomerase family. As to quaternary structure, homodimer. Interacts with KIAA1210. Interacts with PLSCR1. It depends on Mg(2+) as a cofactor. The cofactor is Mn(2+). Ca(2+) serves as cofactor. In terms of processing, (Microbial infection) Deubiquitinated by Epstein-Barr virus BPLF1; leading to stabilized SUMOylated TOP2A trapped in cleavage complexes, which halts the DNA damage response to TOP2A-induced double-strand DNA breaks. SUMOylated. As to expression, expressed in the tonsil, spleen, lymph node, thymus, skin, pancreas, testis, colon, kidney, liver, brain and lung. Also found in breast, colon and lung carcinomas, Hodgkin's disease, large-cell non-Hodgkin's lymphoma, lymphocytic lymphomas and seminomas.

The protein localises to the nucleus. It is found in the nucleolus. It localises to the nucleoplasm. The enzyme catalyses ATP-dependent breakage, passage and rejoining of double-stranded DNA.. Key decatenating enzyme that alters DNA topology by binding to two double-stranded DNA molecules, generating a double-stranded break in one of the strands, passing the intact strand through the broken strand, and religating the broken strand. Plays a role in B-cell differentiation. This chain is DNA topoisomerase 2-beta (TOP2B), found in Homo sapiens (Human).